The primary structure comprises 106 residues: Cell division protein FtsB (106 aa).

The Cytoplasmic portion of the chain corresponds to 1–3; sequence MGK. A helical transmembrane segment spans residues 4 to 21; the sequence is LTLLLLVLLGWLQYSLWL. At 22-106 the chain is on the periplasmic side; the sequence is GKNGIHDFVR…GTPSTQNNAQ (85 aa). Residues 31–62 are a coiled coil; that stretch reads RVKEDVAAQEANNSTLKARNDQLFAEIDDLNG.

It belongs to the FtsB family. As to quaternary structure, part of a complex composed of FtsB, FtsL and FtsQ.

It is found in the cell inner membrane. In terms of biological role, essential cell division protein. May link together the upstream cell division proteins, which are predominantly cytoplasmic, with the downstream cell division proteins, which are predominantly periplasmic. This chain is Cell division protein FtsB, found in Yersinia pseudotuberculosis serotype O:1b (strain IP 31758).